Here is a 362-residue protein sequence, read N- to C-terminus: MGAMAPRTLLLLLAAALAPTQTRAGPHSMRYFETAVSRPGLGEPRYISVGYVDNKEFVRFDSDAENPRYEPQAPWMEQEGPEYWERITQIAKGQEQWFRVNLRTLLGYYNQSAGGTHTLQWMYGCDVGSDGRLLRGYEQFAYDGCDYIALNEDLKTWTAADMAAQITRRKWEQAGAAEYYRAYLEGECVEWLHRYLKNGNATLLRTDSPKAHVTHHPRSKGEVTLRCWALGFYPADITLTWQLNGEELTQDMELVETRPAGDGTFQKWASVVVPLGKEQNYTCRVYHEGLPEPLTLRWEPPPSTDSYMVIVAVLGVLGAMAIIGAVVAFVMKRRRNTGGKGGDYALAPGSQSSEMSLRDCKA.

Positions 1-24 (MGAMAPRTLLLLLAAALAPTQTRA) are cleaved as a signal peptide. An alpha-1 region spans residues 25 to 114 (GPHSMRYFET…LLGYYNQSAG (90 aa)). The Extracellular portion of the chain corresponds to 25–309 (GPHSMRYFET…PPPSTDSYMV (285 aa)). N110 is a glycosylation site (N-linked (GlcNAc...) asparagine). The segment at 115–206 (GTHTLQWMYG…KNGNATLLRT (92 aa)) is alpha-2. A disulfide bridge links C125 with C188. Residues N200 and N280 are each glycosylated (N-linked (GlcNAc...) asparagine). Residues 207–298 (DSPKAHVTHH…GLPEPLTLRW (92 aa)) form an alpha-3 region. Residues 209 to 297 (PKAHVTHHPR…EGLPEPLTLR (89 aa)) enclose the Ig-like C1-type domain. The cysteines at positions 227 and 283 are disulfide-linked. The segment at 299 to 309 (EPPPSTDSYMV) is connecting peptide. The chain crosses the membrane as a helical span at residues 310–331 (IVAVLGVLGAMAIIGAVVAFVM). Residues 332-362 (KRRRNTGGKGGDYALAPGSQSSEMSLRDCKA) are Cytoplasmic-facing. The interval 340–362 (KGGDYALAPGSQSSEMSLRDCKA) is disordered. Residues S353 and S356 each carry the phosphoserine modification.

It belongs to the MHC class I family. As to quaternary structure, heterodimer of an alpha chain and a beta chain (beta-2-microglobulin).

It is found in the membrane. Functionally, involved in the presentation of foreign antigens to the immune system. The chain is H-2 class I histocompatibility antigen, L-D alpha chain (H2-L) from Mus musculus (Mouse).